A 1394-amino-acid polypeptide reads, in one-letter code: DNA-directed RNA polymerase subunit beta' (1394 aa).

4 residues coordinate Zn(2+): C70, C72, C85, and C88. 3 residues coordinate Mg(2+): D470, D472, and D474. Residues C815, C889, C896, and C899 each contribute to the Zn(2+) site.

It belongs to the RNA polymerase beta' chain family. In terms of assembly, the RNAP catalytic core consists of 2 alpha, 1 beta, 1 beta' and 1 omega subunit. When a sigma factor is associated with the core the holoenzyme is formed, which can initiate transcription. The cofactor is Mg(2+). It depends on Zn(2+) as a cofactor.

It carries out the reaction RNA(n) + a ribonucleoside 5'-triphosphate = RNA(n+1) + diphosphate. In terms of biological role, DNA-dependent RNA polymerase catalyzes the transcription of DNA into RNA using the four ribonucleoside triphosphates as substrates. This is DNA-directed RNA polymerase subunit beta' from Anaeromyxobacter dehalogenans (strain 2CP-C).